An 855-amino-acid chain; its full sequence is MHNMEEVREVKVLEKPWVEKYRPQRLDEIVGQEHIVKRLKHYVKTGSMPHLLFAGPPGVGKCLTGDTKVIANGQLFELRELVEKISGGKFGPTPVKGLKVIGIDEDGKLREFEVQYVYKDKTERLIRIRTRLGRELKVTPYHPLLVNRRNGEIKWVKAEELKPGDKLAVPRFLPIVTGEDPLAEWLGYFLGGGYADSKENLIMFTNEDPLLRQRFMELTEKLFSDARIREITHENGTSKVYVNSKKALKLVNSLGNAHIPKECWRGIRSFLRAYFDCNGGVKGNAIVLATASKEMSQEIAYALAGFGIISRIQEYRVIISGSDNVKKFLNEIGFINRNKLEKALKLVKKDDPGHDGLEINYELISYVKDRLRLSFFNDKRSWSYREAKEISWELMKEIYYRLDELEKLKESLSRGILIDWNEVAKRIEEVAEETGIRADELLEYIEGKRKLSFKDYIKIAKVLGIDVEHTIEAMRVFARKYSSYAEIGRRLGTWNSSVKTILESNAVNVEILERIRKIELELIEEILSDEKLKEGIAYLIFLSQNELYWDEITKVEELRGEFIIYDLHVPGYHNFIAGNMPTVVHNTTAALALSRELFGENWRHNFLELNASDERGINVIREKVKEFARTKPIGGASFKIIFLDEADALTQDAQQALRRTMEMFSSNVRFILSCNYSSKIIEPIQSRCAIFRFRPLRDEDIAKRLRYIAENEGLELTEEGLQAILYIAEGDMRRAINILQAAAALDKKITDENVFMVASRARPEDIREMMLLALKGNFLKAREKLREILLKQGLSGEDVLIQMHKEVFNLPIDEPTKVYLADKIGEYNFRLVEGANEMIQLEALLAQFTLVGKKK.

A DOD-type homing endonuclease domain is found at 185 to 308 (WLGYFLGGGY…IAYALAGFGI (124 aa)).

This sequence belongs to the activator 1 small subunits family. RfcS subfamily. Heteromultimer composed of small subunits (RfcS) and large subunits (RfcL). Post-translationally, this protein undergoes a protein self splicing that involves a post-translational excision of the intervening region (intein) followed by peptide ligation.

Its function is as follows. Part of the RFC clamp loader complex which loads the PCNA sliding clamp onto DNA. The sequence is that of Replication factor C small subunit (rfcS) from Pyrococcus horikoshii (strain ATCC 700860 / DSM 12428 / JCM 9974 / NBRC 100139 / OT-3).